The primary structure comprises 155 residues: Ribosome-binding factor A (155 aa).

It belongs to the RbfA family. As to quaternary structure, monomer. Binds 30S ribosomal subunits, but not 50S ribosomal subunits or 70S ribosomes.

The protein localises to the cytoplasm. One of several proteins that assist in the late maturation steps of the functional core of the 30S ribosomal subunit. Associates with free 30S ribosomal subunits (but not with 30S subunits that are part of 70S ribosomes or polysomes). Required for efficient processing of 16S rRNA. May interact with the 5'-terminal helix region of 16S rRNA. The protein is Ribosome-binding factor A of Methylocella silvestris (strain DSM 15510 / CIP 108128 / LMG 27833 / NCIMB 13906 / BL2).